The chain runs to 445 residues: Phosphoglucosamine mutase 1 (445 aa).

Ser102 acts as the Phosphoserine intermediate in catalysis. The Mg(2+) site is built by Ser102, Asp241, Asp243, and Asp245. The residue at position 102 (Ser102) is a Phosphoserine.

This sequence belongs to the phosphohexose mutase family. The cofactor is Mg(2+). Post-translationally, activated by phosphorylation.

The catalysed reaction is alpha-D-glucosamine 1-phosphate = D-glucosamine 6-phosphate. Functionally, catalyzes the conversion of glucosamine-6-phosphate to glucosamine-1-phosphate. This Shewanella amazonensis (strain ATCC BAA-1098 / SB2B) protein is Phosphoglucosamine mutase 1.